Here is a 377-residue protein sequence, read N- to C-terminus: Homoserine O-succinyltransferase (377 aa).

An AB hydrolase-1 domain is found at 50–358 (NAVLICHALS…PSSYGHDSFL (309 aa)). Residue serine 156 is the Nucleophile of the active site. Residue arginine 226 participates in substrate binding. Catalysis depends on residues aspartate 321 and histidine 354. Aspartate 355 is a binding site for substrate.

Belongs to the AB hydrolase superfamily. MetX family. In terms of assembly, homodimer.

The protein localises to the cytoplasm. The enzyme catalyses L-homoserine + succinyl-CoA = O-succinyl-L-homoserine + CoA. The protein operates within amino-acid biosynthesis; L-methionine biosynthesis via de novo pathway; O-succinyl-L-homoserine from L-homoserine: step 1/1. In terms of biological role, transfers a succinyl group from succinyl-CoA to L-homoserine, forming succinyl-L-homoserine. In Nitrosomonas europaea (strain ATCC 19718 / CIP 103999 / KCTC 2705 / NBRC 14298), this protein is Homoserine O-succinyltransferase.